The sequence spans 309 residues: Protein lifeguard 3 (309 aa).

2 disordered regions span residues 1-31 (MSNPSAPPPYEDHNPLYPGSPPPGGYGQPSV) and 64-84 (PMNYGHDYNEEERAGSDSFRP). The span at 70 to 84 (DYNEEERAGSDSFRP) shows a compositional bias: basic and acidic residues. 2 positions are modified to phosphoserine: Ser79 and Ser81. A run of 7 helical transmembrane segments spans residues 101–121 (YCIISVQLLITVAIIAIFTFV), 132–152 (VAVYYVSYAVFLVTYLTLACC), 163–183 (IILLTIFTLALGFVTGTISSM), 188–208 (AVIIAMIITAVVSISVTIFCF), 221–241 (FCVLGIVLMVTGIVTSIVLIF), 244–264 (IYWLHMVYAALGAICFTLFLA), and 286–306 (GALQIYTDIVYIFTFVLQLVG).

This sequence belongs to the BI1 family. LFG subfamily. As to expression, expressed in most tissues except spleen, thymus and testis.

It is found in the membrane. Its subcellular location is the lysosome membrane. It localises to the endosome membrane. Functionally, negatively regulates aortic matrix metalloproteinase-9 (MMP9) production and may play a protective role in vascular remodeling. The protein is Protein lifeguard 3 (Tmbim1) of Mus musculus (Mouse).